Reading from the N-terminus, the 269-residue chain is 4-hydroxy-4-methyl-2-oxoglutarate aldolase cghB (269 aa).

Histidine 48 functions as the Proton acceptor in the catalytic mechanism. Residues glutamate 155 and aspartate 181 each coordinate a divalent metal cation. Aspartate 181 is a binding site for substrate.

The protein belongs to the HpcH/HpaI aldolase family. As to quaternary structure, homohexamer; trimer of dimers. The cofactor is Co(2+). Mn(2+) is required as a cofactor. Zn(2+) serves as cofactor. It depends on Fe(2+) as a cofactor. Requires Mg(2+) as cofactor.

It catalyses the reaction 4-hydroxy-4-methyl-2-oxoglutarate = 2 pyruvate. The protein operates within secondary metabolite biosynthesis. 4-hydroxy-4-methyl-2-oxoglutarate aldolase; part of the gene cluster that mediates the biosynthesis of the tetramic acid Sch210972, a potential anti-HIV fungal natural product that contains a decalin core. The PKS module of cghG together with the enoylreductase cghC catalyze the formation of the polyketide unit which is then conjugated to 4-hydroxyl-4-methyl glutamate (HMG) by the condensation domain of the cghG NRPS module. One unique structural feature of Sch210972 is the tetramic acid motif proposed to be derived from the non-proteinogenic amino acid HMG, by a Dieckmann-type condensation catalyzed by the reductase domain of cghG. The aldolase cghB catalyzes the aldol condensation of 2 molecules of pyruvic acid to yield the intermediate 4-hydroxyl-4-methyl-2-oxoglutarate (HMOG), which can then be stereoselectively transaminated by an unidentified enzyme to form HMG. The Diels-Alderase cghA then uses the Dieckmann product released by cghG as substrate and catalyzes the Diels-Alder cycloaddition to form the decalin ring of Sch210972. CghA also suppresses the nonenzymatic formation of the alternative stereoisomer. The chain is 4-hydroxy-4-methyl-2-oxoglutarate aldolase cghB from Chaetomium globosum (strain ATCC 6205 / CBS 148.51 / DSM 1962 / NBRC 6347 / NRRL 1970) (Soil fungus).